The following is an 810-amino-acid chain: Phenylalanine--tRNA ligase beta subunit (810 aa).

Residues 39–150 (RSWAAGVVLG…LDLPSGSPVG (112 aa)) form the tRNA-binding domain. One can recognise a B5 domain in the interval 407–495 (RGEAIINLRL…RLYGYDHFCE (89 aa)). Residues aspartate 473, aspartate 479, glutamate 482, and glutamate 483 each contribute to the Mg(2+) site. Residues 716-809 (SPYPAVARDL…LTKQFAVSLR (94 aa)) enclose the FDX-ACB domain.

The protein belongs to the phenylalanyl-tRNA synthetase beta subunit family. Type 1 subfamily. As to quaternary structure, tetramer of two alpha and two beta subunits. Requires Mg(2+) as cofactor.

It is found in the cytoplasm. The catalysed reaction is tRNA(Phe) + L-phenylalanine + ATP = L-phenylalanyl-tRNA(Phe) + AMP + diphosphate + H(+). The polypeptide is Phenylalanine--tRNA ligase beta subunit (pheT) (Synechocystis sp. (strain ATCC 27184 / PCC 6803 / Kazusa)).